Here is a 688-residue protein sequence, read N- to C-terminus: Polyribonucleotide nucleotidyltransferase (688 aa).

Residues D484 and D490 each contribute to the Mg(2+) site. The KH domain maps to 550 to 609; the sequence is PTTEIFNVAPDKIIEIIGQGGRVIREIVEKFEVKIDLNKPSGEVKIMGNKERVLKTKEFI. Positions 626 to 688 constitute an S1 motif domain; the sequence is DEVLEAQVKR…NKGKIALDLA (63 aa).

Belongs to the polyribonucleotide nucleotidyltransferase family. Mg(2+) serves as cofactor.

Its subcellular location is the cytoplasm. The catalysed reaction is RNA(n+1) + phosphate = RNA(n) + a ribonucleoside 5'-diphosphate. Its function is as follows. Involved in mRNA degradation. Catalyzes the phosphorolysis of single-stranded polyribonucleotides processively in the 3'- to 5'-direction. The sequence is that of Polyribonucleotide nucleotidyltransferase from Helicobacter acinonychis (strain Sheeba).